The primary structure comprises 405 residues: Solute carrier family 35 member E2B (405 aa).

The tract at residues 1 to 28 is disordered; that stretch reads MSSSVKTPALEELVPGSEEKPKGRSPLS. 10 helical membrane passes run 81 to 101, 106 to 126, 142 to 162, 167 to 187, 195 to 215, 219 to 241, 264 to 284, 296 to 316, 326 to 346, and 347 to 367; these read LWFF…SLLG, MLGA…TLVP, FLMT…LGLV, VAVS…VIMS, TGLL…LCTA, SFNV…QNVF, AAAV…PVIG, VVLL…TAYA, FSVA…IVFG, and NKIT…VLLY. The tract at residues 380-405 is disordered; sequence SLAAATGRAPDDTVEPLLPQDPRQHP.

Belongs to the TPT transporter family. SLC35E subfamily.

It is found in the membrane. Its function is as follows. Putative transporter. This Homo sapiens (Human) protein is Solute carrier family 35 member E2B (SLC35E2B).